Reading from the N-terminus, the 295-residue chain is Cyclin-G1 (295 aa).

The protein belongs to the cyclin family. Cyclin G subfamily. High levels in skeletal muscle, ovary, kidney and colon.

The protein resides in the nucleus. May play a role in growth regulation. Is associated with G2/M phase arrest in response to DNA damage. May be an intermediate by which p53 mediates its role as an inhibitor of cellular proliferation. The chain is Cyclin-G1 (CCNG1) from Homo sapiens (Human).